The chain runs to 110 residues: Spermatid nuclear transition protein 3 (110 aa).

The tract at residues 80 to 110 (RSCAREKLNQSRKRYQNMRQSQRRGQNQKRR) is disordered.

Its subcellular location is the nucleus. It is found in the chromosome. Involved in nuclear basic protein transition: histones are replaced by spermatid specific proteins which are themselves replaced by protamines in late spermatids. The sequence is that of Spermatid nuclear transition protein 3 from Ovis aries (Sheep).